Here is a 144-residue protein sequence, read N- to C-terminus: DNA polymerase III subunit chi (144 aa).

This sequence belongs to the DNA polymerase III chi/HolC chain family. DNA polymerase III contains a core (composed of alpha, epsilon and theta chains) that associates with a tau subunit. This core dimerizes to form the POLIII' complex. PolIII' associates with the gamma complex (composed of gamma, delta, delta', psi and chi chains) and with the beta chain to form the complete DNA polymerase III complex. Interacts directly with the psi subunit (holD). The only subunit of the DNA polymerase III holoenzyme known to interact with single-stranded DNA binding protein (SSB), interacts directly with DNA helicase YoaA.

The enzyme catalyses DNA(n) + a 2'-deoxyribonucleoside 5'-triphosphate = DNA(n+1) + diphosphate. In terms of biological role, part of the beta sliding clamp loading complex, which hydrolyzes ATP to load the beta clamp onto primed DNA to form the DNA replication pre-initiation complex. DNA polymerase III is a complex, multichain enzyme responsible for most of the replicative synthesis in bacteria. This DNA polymerase also exhibits 3' to 5' exonuclease activity. This subunit may stabilize YoaA and/or stimulate the helicase activity of YoaA. The sequence is that of DNA polymerase III subunit chi (holC) from Haemophilus influenzae (strain ATCC 51907 / DSM 11121 / KW20 / Rd).